A 460-amino-acid chain; its full sequence is MSHYAIILAAGKGTRMKSDLPKVLHKVSGITMLEHVFRAVSVIEPAKNVTVIGHKAELVREVLDGQSAFTMQTEQLGTGHAVMMAEEELAGLEGQTLVIAGDTPLITGESLKNLIDFHVNHKNVATILTATADNPFGYGRIIRNENGEVTKIVEQKDANEFEQQVKEINTGTYVFDNKRLFEALKNINTNNAQGEYYLTDVISIFRENGEKVGAYTLRDFEESLGVNDRVALATAEDVMRRRINKAHMINGVTFQNPNATYIDVDVEIAPDVVIEANVTLKGQTKVGAESVLTNGTYIVDSTIGANTVITNSMIEHSVVEKGATVGPFAHIRPDSMLKEGVHIGNFVEVKGSTIGENTKAGHLTYIGNAEVGSDVNFGAGTITVNYDGQHKFKTQIANNAFIGSNSTLIAPLEIGDNALTAAGSTITDNVPADSVAIGRSRQVNKEGYAIKKPHHPSQQK.

The interval 1-229 (MSHYAIILAA…FEESLGVNDR (229 aa)) is pyrophosphorylase. UDP-N-acetyl-alpha-D-glucosamine is bound by residues 8 to 11 (LAAG), K22, Q72, and 77 to 78 (GT). D102 contributes to the Mg(2+) binding site. Positions 139, 154, 169, and 227 each coordinate UDP-N-acetyl-alpha-D-glucosamine. Residue N227 participates in Mg(2+) binding. The segment at 230–250 (VALATAEDVMRRRINKAHMIN) is linker. An N-acetyltransferase region spans residues 251–460 (GVTFQNPNAT…KKPHHPSQQK (210 aa)). UDP-N-acetyl-alpha-D-glucosamine is bound by residues R332 and K350. Residue H362 is the Proton acceptor of the active site. Residues Y365 and N376 each coordinate UDP-N-acetyl-alpha-D-glucosamine. Residues A379, 385–386 (NY), S404, A422, and R439 contribute to the acetyl-CoA site.

It in the N-terminal section; belongs to the N-acetylglucosamine-1-phosphate uridyltransferase family. This sequence in the C-terminal section; belongs to the transferase hexapeptide repeat family. In terms of assembly, homotrimer. Requires Mg(2+) as cofactor.

Its subcellular location is the cytoplasm. The catalysed reaction is alpha-D-glucosamine 1-phosphate + acetyl-CoA = N-acetyl-alpha-D-glucosamine 1-phosphate + CoA + H(+). It carries out the reaction N-acetyl-alpha-D-glucosamine 1-phosphate + UTP + H(+) = UDP-N-acetyl-alpha-D-glucosamine + diphosphate. The protein operates within nucleotide-sugar biosynthesis; UDP-N-acetyl-alpha-D-glucosamine biosynthesis; N-acetyl-alpha-D-glucosamine 1-phosphate from alpha-D-glucosamine 6-phosphate (route II): step 2/2. Its pathway is nucleotide-sugar biosynthesis; UDP-N-acetyl-alpha-D-glucosamine biosynthesis; UDP-N-acetyl-alpha-D-glucosamine from N-acetyl-alpha-D-glucosamine 1-phosphate: step 1/1. It functions in the pathway bacterial outer membrane biogenesis; LPS lipid A biosynthesis. Catalyzes the last two sequential reactions in the de novo biosynthetic pathway for UDP-N-acetylglucosamine (UDP-GlcNAc). The C-terminal domain catalyzes the transfer of acetyl group from acetyl coenzyme A to glucosamine-1-phosphate (GlcN-1-P) to produce N-acetylglucosamine-1-phosphate (GlcNAc-1-P), which is converted into UDP-GlcNAc by the transfer of uridine 5-monophosphate (from uridine 5-triphosphate), a reaction catalyzed by the N-terminal domain. The sequence is that of Bifunctional protein GlmU from Streptococcus thermophilus (strain CNRZ 1066).